We begin with the raw amino-acid sequence, 189 residues long: Crossover junction endodeoxyribonuclease RuvC (189 aa).

Residues Asp-7, Glu-68, and Asp-141 contribute to the active site. Asp-7, Glu-68, and Asp-141 together coordinate Mg(2+).

The protein belongs to the RuvC family. As to quaternary structure, homodimer which binds Holliday junction (HJ) DNA. The HJ becomes 2-fold symmetrical on binding to RuvC with unstacked arms; it has a different conformation from HJ DNA in complex with RuvA. In the full resolvosome a probable DNA-RuvA(4)-RuvB(12)-RuvC(2) complex forms which resolves the HJ. Mg(2+) serves as cofactor.

The protein resides in the cytoplasm. The enzyme catalyses Endonucleolytic cleavage at a junction such as a reciprocal single-stranded crossover between two homologous DNA duplexes (Holliday junction).. In terms of biological role, the RuvA-RuvB-RuvC complex processes Holliday junction (HJ) DNA during genetic recombination and DNA repair. Endonuclease that resolves HJ intermediates. Cleaves cruciform DNA by making single-stranded nicks across the HJ at symmetrical positions within the homologous arms, yielding a 5'-phosphate and a 3'-hydroxyl group; requires a central core of homology in the junction. The consensus cleavage sequence is 5'-(A/T)TT(C/G)-3'. Cleavage occurs on the 3'-side of the TT dinucleotide at the point of strand exchange. HJ branch migration catalyzed by RuvA-RuvB allows RuvC to scan DNA until it finds its consensus sequence, where it cleaves and resolves the cruciform DNA. This is Crossover junction endodeoxyribonuclease RuvC from Rhodococcus opacus (strain B4).